The primary structure comprises 479 residues: Calcium-dependent mitochondrial ATP-magnesium/phosphate carrier protein 3 (479 aa).

Residues 1–208 (MESSKPKNRN…ISKHVKRSRL (208 aa)) lie on the Mitochondrial intermembrane side of the membrane. EF-hand domains lie at 33 to 68 (EREI…LQIP), 69 to 104 (PEYK…KELE), 105 to 135 (LYRI…AGIE), and 136 to 171 (IDDE…YPHE). Residues Asp-82, Asn-84, Asp-86, Arg-88, and Glu-93 each contribute to the Ca(2+) site. Ca(2+) contacts are provided by Asp-149, Asp-151, Asn-153, Thr-155, and Glu-160. 3 Solcar repeats span residues 203 to 286 (VKRS…LKPM), 294 to 381 (IGTS…LKDL), and 392 to 475 (PGPL…MKKN). Residues 209–226 (LLAGGLAGAVSRTATAPL) form a helical membrane-spanning segment. Residues 227–260 (DRLKVVLQVQRAHAGVLPTIKKIWREDKLMGFFR) are Mitochondrial matrix-facing. Residues 261-280 (GNGLNVMKVAPESAIKFCAY) traverse the membrane as a helical segment. Residues 281–303 (EMLKPMIGGEDGDIGTSGRLMAG) lie on the Mitochondrial intermembrane side of the membrane. A helical membrane pass occupies residues 304 to 317 (GMAGALAQTAIYPM). The Mitochondrial matrix portion of the chain corresponds to 318–355 (DLVKTRLQTCVSEGGKAPKLWKLTKDIWVREGPRAFYK). A helical membrane pass occupies residues 356–375 (GLFPSLLGIVPYAGIDLAAY). Over 376–397 (ETLKDLSRTYILQDTEPGPLIQ) the chain is Mitochondrial intermembrane. The helical transmembrane segment at 398 to 415 (LSCGMTSGALGASCVYPL) threads the bilayer. At 416-449 (QVVRTRMQADSSKTTMKQEFMNTMKGEGLRGFYR) the chain is on the mitochondrial matrix side. Residues 450-469 (GLLPNLLKVVPAASITYIVY) traverse the membrane as a helical segment. At 470-479 (EAMKKNMALD) the chain is on the mitochondrial intermembrane side.

This sequence belongs to the mitochondrial carrier (TC 2.A.29) family. As to expression, expressed in flowers, leaves, stems, roots and seedlings, mostly in seedlings.

It is found in the mitochondrion inner membrane. Its activity is regulated as follows. Counter-exchange transport activity is saturable and inhibited by pyridoxal-5'-phosphate, EDTA and EGTA. Activated by calcium Ca(2+) and manganese Mn(2+) ions, and slightly by iron Fe(2+) and zinc Zn(2+) ions. Repressed by copper ions Cu(2+) and slightly by magnesium Mg(2+) ions. Magnesium Mg(2+) ions promotes slightly ATP uptake, ATP-Mg(2+) being exchanged with ATP(4-). In terms of biological role, calcium-dependent mitochondrial carrier protein that catalyzes the import of ATP co-transported with metal divalent cations across the mitochondrial inner membrane in exchange for phosphate (Pi). Can transport phosphate, AMP, ADP, ATP, adenosine 5'-phosphosulfate, sulfate and thiosulfate, and, to a lesser extent, other nucleotides. Binds calcium ions Ca(2+). Also mediates calcium uptake. The chain is Calcium-dependent mitochondrial ATP-magnesium/phosphate carrier protein 3 from Arabidopsis thaliana (Mouse-ear cress).